The chain runs to 42 residues: Omega-theraphotoxin-Asp3a (42 aa).

3 disulfide bridges follow: Cys-1/Cys-16, Cys-8/Cys-21, and Cys-15/Cys-30.

The protein belongs to the neurotoxin 14 (magi-1) family. 08 (Ltx-4) subfamily. Expressed by the venom gland.

It is found in the secreted. Inhibits voltage-gated calcium channels (Cav) in rat cerebellar granule cells. The polypeptide is Omega-theraphotoxin-Asp3a (Aphonopelma sp. (American tarantula)).